Here is a 138-residue protein sequence, read N- to C-terminus: Ribulose bisphosphate carboxylase small subunit (138 aa).

It belongs to the RuBisCO small chain family. In terms of assembly, heterohexadecamer of 8 large and 8 small subunits.

The protein resides in the plastid. It localises to the chloroplast. RuBisCO catalyzes two reactions: the carboxylation of D-ribulose 1,5-bisphosphate, the primary event in carbon dioxide fixation, as well as the oxidative fragmentation of the pentose substrate in the photorespiration process. Both reactions occur simultaneously and in competition at the same active site. Although the small subunit is not catalytic it is essential for maximal activity. The chain is Ribulose bisphosphate carboxylase small subunit from Porphyridium aerugineum (Red microalga).